Reading from the N-terminus, the 616-residue chain is ATP-dependent zinc metalloprotease FtsH (616 aa).

The Cytoplasmic portion of the chain corresponds to 1-8; that stretch reads MRNLFKTA. Residues 9–29 traverse the membrane as a helical segment; sequence TIYILIALVILLLVDIFSGGL. At 30–114 the chain is on the extracellular side; sequence SYNQFFSNLS…VTKEPPQVPW (85 aa). The helical transmembrane segment at 115 to 135 threads the bilayer; that stretch reads WLSTFLPMLIFAGLMIFVWIF. Residues 136–616 lie on the Cytoplasmic side of the membrane; it reads MLQQTQGGGS…VFEDAQPQLV (481 aa). Residue 208–215 participates in ATP binding; it reads GPPGTGKT. A Zn(2+)-binding site is contributed by histidine 430. Residue glutamate 431 is part of the active site. The Zn(2+) site is built by histidine 434 and aspartate 506.

The protein in the central section; belongs to the AAA ATPase family. It in the C-terminal section; belongs to the peptidase M41 family. In terms of assembly, homohexamer. Zn(2+) is required as a cofactor.

It is found in the cell membrane. Acts as a processive, ATP-dependent zinc metallopeptidase for both cytoplasmic and membrane proteins. Plays a role in the quality control of integral membrane proteins. The protein is ATP-dependent zinc metalloprotease FtsH of Caldicellulosiruptor bescii (strain ATCC BAA-1888 / DSM 6725 / KCTC 15123 / Z-1320) (Anaerocellum thermophilum).